Reading from the N-terminus, the 630-residue chain is Differentially expressed in FDCP 6 (630 aa).

Y210 is modified (phosphotyrosine). The region spanning 216–312 is the PH domain; it reads DVLKQGYLWK…WTAAIQTAIR (97 aa). K225 bears the N6-acetyllysine mark. Disordered stretches follow at residues 318–341, 378–418, and 552–630; these read KTSL…RRRA, LQEE…ELKK, and HPIE…APGN. 2 stretches are compositionally biased toward basic and acidic residues: residues 331 to 341 and 378 to 392; these read EQREQRERRRA and LQEE…HKEL. Polar residues predominate over residues 588–606; sequence WGSQGNRTLSVNSSEQKSL. S590 carries the phosphoserine modification. Positions 620 to 630 are enriched in basic and acidic residues; that stretch reads QEEKLDPAPGN.

As to quaternary structure, interacts with IRF4, activated RAC1 and F-actin. Both the phosphorylated and non-phosphorylated forms bind phosphatidylinositol 3,4,5-trisphosphate (PtdInsP3). Interacts with ZAP70. Interacts with RAB11A. Post-translationally, tyrosine-phosphorylated by tyrosine-protein kinase LCK in response to T-cell activation. As to expression, thymus.

It localises to the cytoplasm. The protein localises to the cell membrane. It is found in the nucleus. Its subcellular location is the cytoskeleton. The protein resides in the perinuclear region. It localises to the cell projection. The protein localises to the filopodium. Phosphatidylinositol 3,4,5-trisphosphate-dependent guanine nucleotide exchange factor (GEF) which plays a role in the activation of Rho GTPases RAC1, RhoA and CDC42. Can regulate cell morphology in cooperation with activated RAC1. Involved in immune homeostasis by ensuring proper trafficking and availability of T-cell regulator CTLA-4 at T-cell surface. Plays a role in Th2 (T helper cells) development and/or activation, perhaps by interfering with ZAP70 signaling. Required for optimal T-cell effector function, lymphocyte homeostasis and the prevention of systemic autoimmunity. This is Differentially expressed in FDCP 6 (Def6) from Mus musculus (Mouse).